The primary structure comprises 373 residues: Filamin-binding LIM protein 1 (373 aa).

The interval methionine 1–alanine 70 is filamin-binding. 2 disordered regions span residues arginine 41–glutamate 119 and glutamine 135–lysine 176. The span at leucine 104 to leucine 114 shows a compositional bias: pro residues. LIM zinc-binding domains lie at aspartate 181–arginine 242, cysteine 243–alanine 300, and proline 301–alanine 370. The segment at isoleucine 276–cysteine 373 is FERMT2-binding.

As to quaternary structure, interacts with NKX2-5. Isoform 1 and isoform 3 interact with FERMT2, FLNA, FLNB and FLNC. Isoform 2 interacts with FLNB. As to expression, isoform 1 and isoform 3 are expressed in heart, kidney, lung, pancreas, placenta and platelets. Isoform 2 is expressed in brain, heart, kidney, lung, pancreas, placenta, skeletal muscle and platelets.

It is found in the cell junction. It localises to the focal adhesion. The protein localises to the cytoplasm. Its subcellular location is the cytoskeleton. The protein resides in the stress fiber. Serves as an anchoring site for cell-ECM adhesion proteins and filamin-containing actin filaments. Is implicated in cell shape modulation (spreading) and motility. May participate in the regulation of filamin-mediated cross-linking and stabilization of actin filaments. May also regulate the assembly of filamin-containing signaling complexes that control actin assembly. Promotes dissociation of FLNA from ITGB3 and ITGB7. Promotes activation of integrins and regulates integrin-mediated cell-cell adhesion. The sequence is that of Filamin-binding LIM protein 1 (FBLIM1) from Homo sapiens (Human).